Reading from the N-terminus, the 335-residue chain is Teichoic acids export ATP-binding protein TagH (335 aa).

The 221-residue stretch at 26 to 246 (IKGLFMPKSQ…YDEFVKWFNK (221 aa)) folds into the ABC transporter domain. 60–67 (GINGSGKS) contacts ATP.

This sequence belongs to the ABC transporter superfamily. Teichoic acids exporter (TC 3.A.1.104.1) family. The complex is composed of two ATP-binding proteins (TagH) and two transmembrane proteins (TagG).

The protein resides in the cell membrane. It carries out the reaction ATP + H2O + teichoic acidSide 1 = ADP + phosphate + teichoic acidSide 2.. Functionally, part of the ABC transporter complex TagGH involved in teichoic acids export. Responsible for energy coupling to the transport system. This Listeria monocytogenes serotype 4b (strain F2365) protein is Teichoic acids export ATP-binding protein TagH.